The primary structure comprises 142 residues: Hemoglobin subunit alpha (142 aa).

The Globin domain occupies 2–142 (HLTADDKKHI…VSNVLTSKYR (141 aa)). 2 residues coordinate heme b: His-59 and His-88.

This sequence belongs to the globin family. As to quaternary structure, heterotetramer of two alpha chains and two beta chains. Red blood cells.

Involved in oxygen transport from the lung to the various peripheral tissues. In Xenopus tropicalis (Western clawed frog), this protein is Hemoglobin subunit alpha (hba-A).